The chain runs to 399 residues: 1-deoxy-D-xylulose 5-phosphate reductoisomerase (399 aa).

Residues Thr-16, Gly-17, Ser-18, Ile-19, Gly-42, Arg-43, Asn-44, and Asn-127 each contribute to the NADPH site. Residue Lys-128 coordinates 1-deoxy-D-xylulose 5-phosphate. Position 129 (Glu-129) interacts with NADPH. Asp-153 serves as a coordination point for Mn(2+). Residues Ser-154, Glu-155, Ser-179, and His-202 each coordinate 1-deoxy-D-xylulose 5-phosphate. Mn(2+) is bound at residue Glu-155. Gly-208 is an NADPH binding site. 1-deoxy-D-xylulose 5-phosphate-binding residues include Ser-215, Asn-220, Lys-221, and Glu-224. Glu-224 contacts Mn(2+).

This sequence belongs to the DXR family. Mg(2+) serves as cofactor. Mn(2+) is required as a cofactor.

It carries out the reaction 2-C-methyl-D-erythritol 4-phosphate + NADP(+) = 1-deoxy-D-xylulose 5-phosphate + NADPH + H(+). It participates in isoprenoid biosynthesis; isopentenyl diphosphate biosynthesis via DXP pathway; isopentenyl diphosphate from 1-deoxy-D-xylulose 5-phosphate: step 1/6. Its function is as follows. Catalyzes the NADPH-dependent rearrangement and reduction of 1-deoxy-D-xylulose-5-phosphate (DXP) to 2-C-methyl-D-erythritol 4-phosphate (MEP). In Caulobacter vibrioides (strain NA1000 / CB15N) (Caulobacter crescentus), this protein is 1-deoxy-D-xylulose 5-phosphate reductoisomerase.